A 125-amino-acid polypeptide reads, in one-letter code: Protein ApaG (125 aa).

The 125-residue stretch at 1–125 (MIDAPRIIVQ…FRLAIPSLIN (125 aa)) folds into the ApaG domain.

The polypeptide is Protein ApaG (Edwardsiella ictaluri (strain 93-146)).